The following is a 273-amino-acid chain: MEAEPIPDSSMPAKLLAPPCLNLERLGGSPSQEKPRTPGCCRISERSLWPACQESVTALCFLQETVERLGQSPAQDTPVLGPCWDPMALGTQGRLLLDRDSKDTQTRISQKGRRLQPPGTPSAPPQRRPRKQLNPCRGTERVDPGFEGVTLKFQIKPDSSLQIIPTYSLPCSSRSQESPADAVGGPAAHPGGTEAHSAGSEALEPRRCASCRTQRTPLWRDAEDGTPLCNACGIRYKKYGTRCSSCWLVPRKNVQPKRLCGRCGVSLDPIQEG.

2 disordered regions span residues 99–143 (RDSK…ERVD) and 172–201 (SSRS…AGSE). A GATA-type zinc finger spans residues 208–232 (CASCRTQRTPLWRDAEDGTPLCNAC).

It is found in the nucleus. Functionally, transcriptional regulator that plays a key role in germ cell development. Determines the oogenic fate by activating key genes for the oogenic program and meiotic prophase entry. Acts downstream of bone morphogenetic protein (BMP) by regulating expression of genes required for the oogenic programs, which are repressed by Polycomb activities in sexually uncommitted germ cells. Regulates expression of STRA8, a central downstream effector for the meiotic program. Acts independently of retinoic acid (RA). In males, not required for germ-cell sex determination, but required to allow the spermatogonia to efficiently accomplish the meiotic prophase. The chain is GATA-type zinc finger protein 1 from Homo sapiens (Human).